Consider the following 74-residue polypeptide: Exodeoxyribonuclease 7 small subunit (74 aa).

The protein belongs to the XseB family. As to quaternary structure, heterooligomer composed of large and small subunits.

Its subcellular location is the cytoplasm. The enzyme catalyses Exonucleolytic cleavage in either 5'- to 3'- or 3'- to 5'-direction to yield nucleoside 5'-phosphates.. Functionally, bidirectionally degrades single-stranded DNA into large acid-insoluble oligonucleotides, which are then degraded further into small acid-soluble oligonucleotides. The protein is Exodeoxyribonuclease 7 small subunit of Neisseria gonorrhoeae (strain ATCC 700825 / FA 1090).